The chain runs to 54 residues: uncharacterized protein (54 aa).

The interval 1–54 is disordered; it reads MWTLKARKEHTGISGKPTARTDRHGSTRSGDSELQASARRFSRLPDRCGAQGVT.

This is an uncharacterized protein from Mycobacterium tuberculosis (strain ATCC 25618 / H37Rv).